A 457-amino-acid polypeptide reads, in one-letter code: Multidrug resistance protein MdtK (457 aa).

Transmembrane regions (helical) follow at residues 11-31, 53-73, 93-113, 127-147, 160-180, 189-209, 243-263, 276-296, 314-334, 350-370, 387-407, and 418-438; these read LLALAIPVILAQIAQTAMGFV, IWLPAILFGHGLLLALTPVIA, WLAGFVSVLIMLVLWNAGYII, AVGYLRALLWGAPGYLFFQVA, GMVMGFIGLLVNIPVNYIFIY, GGVGCGVATAAVYWVMFLAMV, LPIALALFFEVTLFAVVALLV, IALNFSSLMFVLPMSLAAAVT, AARTGLMVGVCMATLTAIFTV, VVTLAAHLMLLAAVYQISDSI, IFYITFTAYWVLGLPSGYILA, and PAGFWIGFIIGLTSAAIMMML.

The protein belongs to the multi antimicrobial extrusion (MATE) (TC 2.A.66.1) family. MdtK subfamily.

The protein resides in the cell inner membrane. Functionally, multidrug efflux pump that functions probably as a Na(+)/drug antiporter. The sequence is that of Multidrug resistance protein MdtK from Escherichia coli O9:H4 (strain HS).